We begin with the raw amino-acid sequence, 158 residues long: Cytochrome c-type biogenesis protein CcmE (158 aa).

The Cytoplasmic segment spans residues 1-7 (MKPRHRR). The chain crosses the membrane as a helical; Signal-anchor for type II membrane protein span at residues 8-28 (LTLIALVLGGLGLSAGLALTA). Topologically, residues 29–158 (FQDNLVFFFT…DGHPETTTAY (130 aa)) are periplasmic. Positions 123 and 127 each coordinate heme. Residues 138-158 (RIGQGNGTPGPDGHPETTTAY) are disordered.

It belongs to the CcmE/CycJ family.

It is found in the cell inner membrane. Heme chaperone required for the biogenesis of c-type cytochromes. Transiently binds heme delivered by CcmC and transfers the heme to apo-cytochromes in a process facilitated by CcmF and CcmH. The polypeptide is Cytochrome c-type biogenesis protein CcmE (Alkalilimnicola ehrlichii (strain ATCC BAA-1101 / DSM 17681 / MLHE-1)).